A 247-amino-acid chain; its full sequence is Protein NipSnap homolog 3A (247 aa).

N6-acetyllysine occurs at positions 48 and 166.

It belongs to the NipSnap family. As to quaternary structure, interacts with the Salmonella typhimurium virulence protein spiC. Ubiquitous. Highly expressed in liver, kidney and muscle. Expressed at intermediate level in brain, heart, colon, thymus, kidney, small intestine, placenta, lung, leukocytes and spleen.

It localises to the cytoplasm. It is found in the cytosol. The polypeptide is Protein NipSnap homolog 3A (NIPSNAP3A) (Homo sapiens (Human)).